We begin with the raw amino-acid sequence, 343 residues long: N-malonyltransferase FDB2 (343 aa).

Cys-107 (acyl-thioester intermediate) is an active-site residue. His-155 functions as the Proton acceptor in the catalytic mechanism. The active site involves Asp-170.

This sequence belongs to the arylamine N-acetyltransferase family.

It functions in the pathway xenobiotic degradation. Functionally, N-malonyltransferase; part of the Fusarium detoxification of benzoxazolinone cluster involved in the degradation of benzoxazolinones produced by the host plant. Maize, wheat, and rye produce the 2 benzoxazinone phytoanticipins 2,4-dihy-droxy-7-methoxy-1,4-benzoxazin-3-one (DIMBOA) and 2,4-dihydroxy-1,4-benzoxazin-3-one (DIBOA) that, due to their inherent instability once released, spontaneously degrade to the more stable corresponding benzoxazolinones, 6-methoxy-2-benzoxazolinone (MBOA) and 2-benzoxazolinone (BOA), respectively. The first step in the detoxification of benzoxazolinones involves the hydrolysis of the cyclic ester bond of benzoxazolinones by the gamma-lactamase FDB1 to aminophenols. FDB1 is able to convert BOA into 2-aminophenol (2-AP), as well as MBOA into 5-methoxy-2-aminophenol (2-AMP). The N-malonyltransferase FDB2 then metabolizes aminophenols via N-malonylation to non-toxic malonamic acids. FDB2 converts 2-AP into N-(2-hydroxyphenyl) malonamic acid (HPMA) and 2-AMP into N-(2-hydroxy-4-methoxyphenyl) malonamic acid (HMPMA). The cluster also contains 2 transcription factors (FDB3 and FPSE_08121), an aldo-keto reductase (FPSE_08125) that possibly associates with a ketone component of BOA and MBOA degradation, an esterase (FPSE_08126), an acyl-CoA transferase (FPSE_08120), a solute carrier protein (FPSE_08119) and a transmembrane transporter (FPSE_08127) proposed to shuttle metabolites of benzoxazolinone degradation. The polypeptide is N-malonyltransferase FDB2 (Fusarium pseudograminearum (strain CS3096) (Wheat and barley crown-rot fungus)).